Consider the following 258-residue polypeptide: Tryptophan synthase alpha chain (258 aa).

Residues glutamate 50 and aspartate 61 each act as proton acceptor in the active site.

Belongs to the TrpA family. As to quaternary structure, tetramer of two alpha and two beta chains.

It catalyses the reaction (1S,2R)-1-C-(indol-3-yl)glycerol 3-phosphate + L-serine = D-glyceraldehyde 3-phosphate + L-tryptophan + H2O. Its pathway is amino-acid biosynthesis; L-tryptophan biosynthesis; L-tryptophan from chorismate: step 5/5. The alpha subunit is responsible for the aldol cleavage of indoleglycerol phosphate to indole and glyceraldehyde 3-phosphate. This is Tryptophan synthase alpha chain from Clostridium beijerinckii (strain ATCC 51743 / NCIMB 8052) (Clostridium acetobutylicum).